The chain runs to 547 residues: MSAKDIKFGPEARNLMLDGVNMLANAVKVTLGPKGRNVVLDKSFGGPTITKDGVSVAQEITLEGKFENMGAQMVKEVASKTNDIAGDGTTTATVLAQALVTEGVKSVAAGMNPMDLKRGIDKATEVAVNALHDFSQPCNDTKAIAQVGTISANSDVSVGDIIADAMEKVGQAGVITVEEGSGFENELDVVEGMQFDRGYLSPYFVNNQDTMTADLESPFVLLHDAKISNIRDLLPALEIVQKSSKALLIIAEDIDGEALATLVVNNMRGIVKVAAVKAPGFGDRRKAILEDIAILTGSVVISEEVGLSLEKVTEEHLGTAKRIEIGKENTVIVDGAGKKSNIDGRVNQIKAQIETTTSDYDKEKLLERLAKLSGGVAVIKVGAATEVAMKEKKDHVDDALHATRAAVEEGVVPGGGVALVRTIKALDGLTGDNHDQNIGIDIAKRAMEAPLRQIVTNGGGEASVVLNNVADGKDNYGYNATTEEYGDMLKMGILDPTKVVRAALQHAASISGLMITTEAMITDIPQDATPTASPDMGGMGGMGGGMM.

ATP is bound by residues 30 to 33 (TLGP), lysine 51, 87 to 91 (DGTTT), glycine 415, and aspartate 495. Residues 526–547 (QDATPTASPDMGGMGGMGGGMM) form a disordered region. The segment covering 537-547 (GGMGGMGGGMM) has biased composition (gly residues).

Belongs to the chaperonin (HSP60) family. In terms of assembly, forms a cylinder of 14 subunits composed of two heptameric rings stacked back-to-back. Interacts with the co-chaperonin GroES.

The protein resides in the cytoplasm. The catalysed reaction is ATP + H2O + a folded polypeptide = ADP + phosphate + an unfolded polypeptide.. Its function is as follows. Together with its co-chaperonin GroES, plays an essential role in assisting protein folding. The GroEL-GroES system forms a nano-cage that allows encapsulation of the non-native substrate proteins and provides a physical environment optimized to promote and accelerate protein folding. The chain is Chaperonin GroEL from Vesicomyosocius okutanii subsp. Calyptogena okutanii (strain HA).